The chain runs to 394 residues: DNA primase large subunit PriL (394 aa).

The [4Fe-4S] cluster site is built by Cys-231, Cys-340, Cys-351, and Cys-357.

This sequence belongs to the eukaryotic-type primase large subunit family. As to quaternary structure, heterodimer of a small subunit (PriS) and a large subunit (PriL). The cofactor is [4Fe-4S] cluster.

Its function is as follows. Regulatory subunit of DNA primase, an RNA polymerase that catalyzes the synthesis of short RNA molecules used as primers for DNA polymerase during DNA replication. Stabilizes and modulates the activity of the small subunit, increasing the rate of DNA synthesis, and conferring RNA synthesis capability. The DNA polymerase activity may enable DNA primase to also catalyze primer extension after primer synthesis. May also play a role in DNA repair. The chain is DNA primase large subunit PriL from Pyrococcus horikoshii (strain ATCC 700860 / DSM 12428 / JCM 9974 / NBRC 100139 / OT-3).